The following is a 214-amino-acid chain: MTTLADLRINYSRASLDEADAAPDPFVQFDRWFKEALAAKLPEPNTMTVATVGADGRPSARILLIKAVDERGFVFFTNYESRKGHDLAANPHAALLFYWIELERQVRIEGRIEKTSTDESDRYFASRPLGSRIGAWASEQSTVIDSRATLEAREKEVAARYGENPPRPPHWGGYRLVPDAIEFWQGRPSRLHDRLLYTRDDAAATGWSISRLAP.

Residues 8-11 (RINY) and Lys-66 contribute to the substrate site. Residues 61 to 66 (RILLIK), 76 to 77 (FT), Arg-82, Lys-83, and Gln-105 contribute to the FMN site. 3 residues coordinate substrate: Tyr-123, Arg-127, and Ser-131. FMN contacts are provided by residues 140-141 (QS) and Trp-184. 190 to 192 (RLH) serves as a coordination point for substrate. Arg-194 is a binding site for FMN.

It belongs to the pyridoxamine 5'-phosphate oxidase family. Homodimer. Requires FMN as cofactor.

The catalysed reaction is pyridoxamine 5'-phosphate + O2 + H2O = pyridoxal 5'-phosphate + H2O2 + NH4(+). It catalyses the reaction pyridoxine 5'-phosphate + O2 = pyridoxal 5'-phosphate + H2O2. It participates in cofactor metabolism; pyridoxal 5'-phosphate salvage; pyridoxal 5'-phosphate from pyridoxamine 5'-phosphate: step 1/1. It functions in the pathway cofactor metabolism; pyridoxal 5'-phosphate salvage; pyridoxal 5'-phosphate from pyridoxine 5'-phosphate: step 1/1. Its function is as follows. Catalyzes the oxidation of either pyridoxine 5'-phosphate (PNP) or pyridoxamine 5'-phosphate (PMP) into pyridoxal 5'-phosphate (PLP). This chain is Pyridoxine/pyridoxamine 5'-phosphate oxidase, found in Burkholderia vietnamiensis (strain G4 / LMG 22486) (Burkholderia cepacia (strain R1808)).